A 69-amino-acid polypeptide reads, in one-letter code: DNA-directed RNA polymerase subunit epsilon (69 aa).

Belongs to the RNA polymerase subunit epsilon family. Monomer. RNAP is composed of a core of 2 alpha, a beta and a beta' subunit. The core is associated with a delta subunit, and at least one of epsilon or omega. When a sigma factor is associated with the core the holoenzyme is formed, which can initiate transcription.

The protein resides in the cytoplasm. It localises to the nucleoid. It carries out the reaction RNA(n) + a ribonucleoside 5'-triphosphate = RNA(n+1) + diphosphate. Functionally, a non-essential component of RNA polymerase (RNAP). Has a similar structure to bacteriophage T7 protein Gp2 (AC P03704), which is known to bind to RNAP in the DNA binding-cleft. Unlike Gp2 however, this protein does not inhibit transcription initiation. In vitro reconstitution experiments show this subunit is dispensible. This Bacillus subtilis (strain 168) protein is DNA-directed RNA polymerase subunit epsilon.